The chain runs to 427 residues: F-box protein At2g16450 (427 aa).

Residues 1–45 form the F-box domain; sequence MNPSPITIDLILEILSRLPAKSVRRFHCVSKRWASIFGSPYFKEL.

The sequence is that of F-box protein At2g16450 from Arabidopsis thaliana (Mouse-ear cress).